Here is a 423-residue protein sequence, read N- to C-terminus: Glucose-1-phosphate adenylyltransferase (423 aa).

Residues Tyr112, Gly177, 192–193, and Ser210 contribute to the alpha-D-glucose 1-phosphate site; that span reads EK.

It belongs to the bacterial/plant glucose-1-phosphate adenylyltransferase family. In terms of assembly, homotetramer.

It carries out the reaction alpha-D-glucose 1-phosphate + ATP + H(+) = ADP-alpha-D-glucose + diphosphate. It participates in glycan biosynthesis; glycogen biosynthesis. Its function is as follows. Involved in the biosynthesis of ADP-glucose, a building block required for the elongation reactions to produce glycogen. Catalyzes the reaction between ATP and alpha-D-glucose 1-phosphate (G1P) to produce pyrophosphate and ADP-Glc. This is Glucose-1-phosphate adenylyltransferase from Rhodospirillum rubrum (strain ATCC 11170 / ATH 1.1.1 / DSM 467 / LMG 4362 / NCIMB 8255 / S1).